A 227-amino-acid polypeptide reads, in one-letter code: MGNCVGRQRRERPAAPGHPRKRAGRNEPLKKERLKWKSDYPMTDGQLRSKRDEFWDTAPAFEGRKEIWDALKAAAYAAEANDHELAQAILDGASITLPHGTLCECYDELGNRYQLPIYCLSPPVNLLLEHTEEESLEPPEPTPSVRREFPLKVRLSTGKDVRLNASLPDTVGQLKRQLHSQEGIEPSWQRWFFSGKLLTDRTRLQETKIQKDFVIQVIINQPPPPQD.

Positions methionine 1–methionine 42 are disordered. The segment covering glycine 24–serine 38 has biased composition (basic and acidic residues). The 76-residue stretch at phenylalanine 149–proline 224 folds into the Ubiquitin-like domain.

In terms of assembly, interacts with UBTD1.

In terms of biological role, may be involved in the regulation of cellular senescence through a positive feedback loop with TP53. Is a TP53 downstream target gene that increases the stability of TP53 protein by promoting the ubiquitination and degradation of MDM2. The polypeptide is Ubiquitin domain-containing protein 1 (Ubtd1) (Mus musculus (Mouse)).